An 859-amino-acid chain; its full sequence is Leucine--tRNA ligase (859 aa).

A 'HIGH' region motif is present at residues 43–53; it reads PYPSGRIHMGH. Positions 614 to 618 match the 'KMSKS' region motif; sequence KMSKS. K617 is an ATP binding site.

Belongs to the class-I aminoacyl-tRNA synthetase family.

The protein localises to the cytoplasm. The enzyme catalyses tRNA(Leu) + L-leucine + ATP = L-leucyl-tRNA(Leu) + AMP + diphosphate. This is Leucine--tRNA ligase from Magnetococcus marinus (strain ATCC BAA-1437 / JCM 17883 / MC-1).